Reading from the N-terminus, the 494-residue chain is Sugiol synthase (494 aa).

A helical transmembrane segment spans residues 3–23; that stretch reads SFSLLAALFFISAATWFISSR. C437 lines the heme pocket.

The protein belongs to the cytochrome P450 family. Requires heme as cofactor. Expressed in roots.

The protein localises to the membrane. The catalysed reaction is ferruginol + 2 reduced [NADPH--hemoprotein reductase] + 2 O2 = sugiol + 2 oxidized [NADPH--hemoprotein reductase] + 3 H2O + 2 H(+). It carries out the reaction ferruginol + reduced [NADPH--hemoprotein reductase] + O2 = 11-hydroxyferruginol + oxidized [NADPH--hemoprotein reductase] + H2O + H(+). The enzyme catalyses 11-hydroxyferruginol + 2 reduced [NADPH--hemoprotein reductase] + 2 O2 = 11-hydroxysugiol + 2 oxidized [NADPH--hemoprotein reductase] + 3 H2O + 2 H(+). It participates in secondary metabolite biosynthesis; terpenoid biosynthesis. Functionally, monooxygenase that oxidizes ferruginol to produce sugiol. Oxidizes ferruginol at C-12 to produce 11-hydroxyferruginol. Can oxidize 11-hydroxyferruginol to 11-hydroxysugiol. These products are intermediates in tanshinone biosynthesis. The sequence is that of Sugiol synthase from Salvia miltiorrhiza (Chinese sage).